Consider the following 64-residue polypeptide: U6-theraphotoxin-Cg1a (64 aa).

An N-terminal signal peptide occupies residues 1-20 (MTRKILAVLLVFTLVACNNA). The propeptide occupies 21-38 (EKYSETDVEDSPMIQERR). 3 disulfides stabilise this stretch: Cys39-Cys55, Cys46-Cys58, and Cys54-Cys63.

It belongs to the neurotoxin 36 family. 02 subfamily. Expressed by the venom gland.

The protein localises to the secreted. Its function is as follows. Probable ion channel inhibitor. This chain is U6-theraphotoxin-Cg1a, found in Chilobrachys guangxiensis (Chinese earth tiger tarantula).